The sequence spans 247 residues: Killer cell lectin-like receptor subfamily I member 2 (247 aa).

The segment covering 1–12 (MPRKKQNERGTN) has biased composition (basic and acidic residues). A disordered region spans residues 1 to 39 (MPRKKQNERGTNKQEIINIETKSSTFQEKQRQSKTDQIS). The Cytoplasmic segment spans residues 1–79 (MPRKKQNERG…GTDPWLTTWR (79 aa)). A helical membrane pass occupies residues 80 to 100 (IITVILGTSCIILVTKVGFLI). The Extracellular segment spans residues 101–247 (PNLFSRGEKR…KAYTCEFNLQ (147 aa)). N125, N196, N212, and N218 each carry an N-linked (GlcNAc...) asparagine glycan. Residues 139 to 243 (FGNNFYLFFR…CSSKKAYTCE (105 aa)) form the C-type lectin domain. 2 disulfide bridges follow: C160/C242 and C221/C234.

In terms of assembly, heterodimer with KLRE1. In terms of tissue distribution, expressed in natural killer (NK) cells.

It localises to the cell membrane. Functionally, lectin-like receptor for natural killer (NK) cells. Heterodimer formation with KLRE1 mediates NK cell cytolytic activity. This chain is Killer cell lectin-like receptor subfamily I member 2, found in Rattus norvegicus (Rat).